The primary structure comprises 443 residues: Phosphoglucosamine mutase (443 aa).

The active-site Phosphoserine intermediate is the S100. Mg(2+)-binding residues include S100, D239, D241, and D243. S100 is modified (phosphoserine).

It belongs to the phosphohexose mutase family. It depends on Mg(2+) as a cofactor. Post-translationally, activated by phosphorylation.

It catalyses the reaction alpha-D-glucosamine 1-phosphate = D-glucosamine 6-phosphate. Catalyzes the conversion of glucosamine-6-phosphate to glucosamine-1-phosphate. This Shewanella loihica (strain ATCC BAA-1088 / PV-4) protein is Phosphoglucosamine mutase.